Here is a 560-residue protein sequence, read N- to C-terminus: Membrane protein insertase YidC (560 aa).

The chain crosses the membrane as a helical span at residues 7–27 (ILIVALAIVSYVMVLKWNQDY). Positions 38-56 (ASSTTTSGLPDTATGNNAA) are enriched in polar residues. A disordered region spans residues 38–76 (ASSTTTSGLPDTATGNNAAASDDIPRAASDTSAPAETPV). The next 4 helical transmembrane spans lie at 367 to 387 (IVGN…GIFF), 437 to 457 (LGGC…YWVL), 468 to 488 (FMLW…PIIM), and 515 to 535 (PIIF…YWVV).

This sequence belongs to the OXA1/ALB3/YidC family. Type 1 subfamily. In terms of assembly, interacts with the Sec translocase complex via SecD. Specifically interacts with transmembrane segments of nascent integral membrane proteins during membrane integration.

The protein resides in the cell inner membrane. Functionally, required for the insertion and/or proper folding and/or complex formation of integral membrane proteins into the membrane. Involved in integration of membrane proteins that insert both dependently and independently of the Sec translocase complex, as well as at least some lipoproteins. Aids folding of multispanning membrane proteins. This chain is Membrane protein insertase YidC, found in Pseudomonas fluorescens (strain Pf0-1).